We begin with the raw amino-acid sequence, 173 residues long: Zinc resistance-associated protein homolog (173 aa).

Positions 1–28 (MNSKRIALGIIALATVVSLGTAANNAFA) are cleaved as a signal peptide.

This sequence belongs to the ZraP family.

This is Zinc resistance-associated protein homolog from Nitratidesulfovibrio vulgaris (strain ATCC 29579 / DSM 644 / CCUG 34227 / NCIMB 8303 / VKM B-1760 / Hildenborough) (Desulfovibrio vulgaris).